The following is a 317-amino-acid chain: Protein phosphatase PTC7 homolog fig (317 aa).

The PPM-type phosphatase domain occupies 46-312; the sequence is PYLVTVVQGR…DDITLILASV (267 aa). Positions 90, 91, and 235 each coordinate Mn(2+).

This sequence belongs to the PP2C family. The cofactor is Mg(2+). Mn(2+) serves as cofactor.

It carries out the reaction O-phospho-L-seryl-[protein] + H2O = L-seryl-[protein] + phosphate. The enzyme catalyses O-phospho-L-threonyl-[protein] + H2O = L-threonyl-[protein] + phosphate. This Drosophila erecta (Fruit fly) protein is Protein phosphatase PTC7 homolog fig.